We begin with the raw amino-acid sequence, 157 residues long: Succinate dehydrogenase assembly factor 2-B, mitochondrial (157 aa).

Residues 1–22 constitute a mitochondrion transit peptide; it reads MLSQWFRGRHLVVRSALFSRRR.

This sequence belongs to the SDHAF2 family. In terms of assembly, interacts with the flavoprotein subunit within the SDH catalytic dimer.

The protein localises to the mitochondrion matrix. Plays an essential role in the assembly of succinate dehydrogenase (SDH), an enzyme complex (also referred to as respiratory complex II) that is a component of both the tricarboxylic acid (TCA) cycle and the mitochondrial electron transport chain, and which couples the oxidation of succinate to fumarate with the reduction of ubiquinone (coenzyme Q) to ubiquinol. Required for flavinylation (covalent attachment of FAD) of the flavoprotein subunit of the SDH catalytic dimer. The chain is Succinate dehydrogenase assembly factor 2-B, mitochondrial from Drosophila mojavensis (Fruit fly).